Consider the following 524-residue polypeptide: Nif-specific regulatory protein (524 aa).

The segment at 1–182 (MIHKSDSDTT…AQTIRLMILP (182 aa)) is a domain. The GAF domain maps to 35-176 (EASKTLQEVL…TVANLIAQTI (142 aa)). The Sigma-54 factor interaction domain maps to 212-481 (MVGKSPAMRQ…DGWLDNSLDE (270 aa)). Residues 240–247 (GESGTGKE) and 303–312 (ADGGTLFLDE) contribute to the ATP site. Positions 482–524 (RQRLIAALEKAGWVQAKAARLLGMTPRQVAYRIQIMDITMPRL) are C-terminal DNA-binding domain. Residues 496-515 (QAKAARLLGMTPRQVAYRIQ) constitute a DNA-binding region (H-T-H motif).

In terms of assembly, interacts with sigma-54.

Required for activation of most nif operons, which are directly involved in nitrogen fixation. The chain is Nif-specific regulatory protein (nifA) from Klebsiella oxytoca.